The following is a 67-amino-acid chain: Metallothionein-A (67 aa).

Belongs to the metallothionein superfamily. Type 4 family.

Functionally, metallothioneins have a high content of cysteine residues that bind various heavy metals. This is Metallothionein-A from Sphaerechinus granularis (Purple sea urchin).